The primary structure comprises 230 residues: 2,3-bisphosphoglycerate-dependent phosphoglycerate mutase (230 aa).

Substrate contacts are provided by residues 8 to 15 (RHGESEWN), 21 to 22 (TG), R60, 87 to 90 (ERHY), K98, 114 to 115 (RR), and 183 to 184 (GN). Residue H9 is the Tele-phosphohistidine intermediate of the active site. E87 serves as the catalytic Proton donor/acceptor.

Belongs to the phosphoglycerate mutase family. BPG-dependent PGAM subfamily.

The enzyme catalyses (2R)-2-phosphoglycerate = (2R)-3-phosphoglycerate. The protein operates within carbohydrate degradation; glycolysis; pyruvate from D-glyceraldehyde 3-phosphate: step 3/5. In terms of biological role, catalyzes the interconversion of 2-phosphoglycerate and 3-phosphoglycerate. The polypeptide is 2,3-bisphosphoglycerate-dependent phosphoglycerate mutase (Streptococcus gordonii (strain Challis / ATCC 35105 / BCRC 15272 / CH1 / DL1 / V288)).